Reading from the N-terminus, the 318-residue chain is L-lactate dehydrogenase (318 aa).

NAD(+) is bound by residues V15, D36, and K41. R89 is a substrate binding site. Residues S102, 119–121, and T144 each bind NAD(+); that span reads ITN. Position 121 to 124 (121 to 124) interacts with substrate; sequence NPVD. Residue 149-152 participates in substrate binding; the sequence is DSAR. H176 functions as the Proton acceptor in the catalytic mechanism. Substrate is bound at residue T231.

This sequence belongs to the LDH/MDH superfamily. LDH family. In terms of assembly, homotetramer.

Its subcellular location is the cytoplasm. It carries out the reaction (S)-lactate + NAD(+) = pyruvate + NADH + H(+). It participates in fermentation; pyruvate fermentation to lactate; (S)-lactate from pyruvate: step 1/1. Catalyzes the conversion of lactate to pyruvate. This chain is L-lactate dehydrogenase, found in Fusobacterium nucleatum subsp. nucleatum (strain ATCC 25586 / DSM 15643 / BCRC 10681 / CIP 101130 / JCM 8532 / KCTC 2640 / LMG 13131 / VPI 4355).